Here is a 331-residue protein sequence, read N- to C-terminus: Flagellar P-ring protein (331 aa).

An N-terminal signal peptide occupies residues 1–25 (MKKRLAVLLVIVLTITFSFSVTTRI).

The protein belongs to the FlgI family. In terms of assembly, the basal body constitutes a major portion of the flagellar organelle and consists of four rings (L,P,S, and M) mounted on a central rod.

The protein resides in the periplasm. The protein localises to the bacterial flagellum basal body. Functionally, assembles around the rod to form the L-ring and probably protects the motor/basal body from shearing forces during rotation. This is Flagellar P-ring protein from Thermotoga petrophila (strain ATCC BAA-488 / DSM 13995 / JCM 10881 / RKU-1).